Here is a 393-residue protein sequence, read N- to C-terminus: Probable acetyl-CoA acetyltransferase (393 aa).

The Acyl-thioester intermediate role is filled by Cys88. Residues His348 and Cys378 each act as proton acceptor in the active site.

It belongs to the thiolase-like superfamily. Thiolase family.

The protein localises to the cytoplasm. The catalysed reaction is 2 acetyl-CoA = acetoacetyl-CoA + CoA. This is Probable acetyl-CoA acetyltransferase (yqeF) from Escherichia coli (strain K12).